Reading from the N-terminus, the 534-residue chain is MKAWASTGRGLRINNVWCQQRLLHPLPSRDDTHAIAFSSSPGKSDPEQEGVTGPNKKHSDLATIKQPTSGIRRQDASSSSCFAGRGSSGLEGCRDRRRPLRSYTNISLELAVGGPLTMVPQICHPVKARQPLVVHEWNIFRSIPSTFILTEEGPPRCHRFLGTELSYSSHPEIPIRIPRCRIRDAPLPHSPRITLHGHRNSGVPQRSAARSPAGTNGFIIPPWNHYMYEPECRLTRLCGQAPHSRVPPCGACAPNTTRSTRGVAGHIAKGLSRIVEPPLWIVILPPKRILPLPKGEPSIHYARCVNHFMIASKAATSAEKWKHHHPRFRRYHPSARARSGFMDQSFEDCSASLCYVSGTRPEIRKVRARMVGDPLLTGTPSEELLAATPTTHSIGLSAEDKYRSTAGRPTSRSARTILPRDDDVSNRSYRISASIHYCGECSKERNGLYRMQHIPRSSCAKTPARKHGGTIRVARDEYGPGVFRAPPPTPAEGRALLLIGVRRQGRTNWYSDMTRVDCVANHLRRERAPHTRCR.

The segment at 29–95 (RDDTHAIAFS…GSSGLEGCRD (67 aa)) is disordered.

Belongs to the intron maturase 2 family. MatK subfamily.

Its subcellular location is the plastid. It localises to the chloroplast. Functionally, usually encoded in the trnK tRNA gene intron. Probably assists in splicing its own and other chloroplast group II introns. The protein is Probable maturase K (matK) of Selaginella uncinata (Blue spike-moss).